The chain runs to 422 residues: MVTIVLGSQWGDEGKGKITDYLSQDATLCCRSAGGHNAGHTIVHDSVTYDFHILPSGLVSPKCINLIGAGTVVHIPSFFKELSALADKGLVDVDSRVFISDRAHVCFDLHSVVDGLEEAKLGGRKVGTTGKGIGPCYSDKASRRGVRVGEILDEEVFERKLRNLESGYRSRFGELAYDVEDEINRFKEYRQKLKPYIVDQLSFLQKYKNDDRILVEGANALMLDLDHGTYPFVTSSSTGLGGAIQGLSLNPTKIKNIIGVVKAYTTRVGSGPFPTEQLNEFGEKLQVAGREFGVTTGRKRRCGWFDLVLCRYSLAVNHYTALNLTKLDILDDFDEIKVAVAYTLPDGTRLEDSYPADPNLIEKLEVEYITLPGWKTNTMGLTKYEDLPENAQKYVEYIERGLDGVPIKWIGTGPAREHLIIR.

GTP contacts are provided by residues 11–17 and 39–41; these read GDEGKGK and GHT. The Proton acceptor role is filled by Asp12. Mg(2+)-binding residues include Asp12 and Gly39. IMP-binding positions include 12 to 15, 37 to 40, Thr129, Arg143, Asn219, Thr234, and Arg298; these read DEGK and NAGH. Catalysis depends on His40, which acts as the Proton donor. Substrate is bound at residue 294-300; the sequence is VTTGRKR. Residues Arg300, 326–328, and 411–413 contribute to the GTP site; these read KLD and GTG.

This sequence belongs to the adenylosuccinate synthetase family. As to quaternary structure, homodimer. The cofactor is Mg(2+).

Its subcellular location is the cytoplasm. The catalysed reaction is IMP + L-aspartate + GTP = N(6)-(1,2-dicarboxyethyl)-AMP + GDP + phosphate + 2 H(+). It participates in purine metabolism; AMP biosynthesis via de novo pathway; AMP from IMP: step 1/2. Functionally, plays an important role in the de novo pathway and in the salvage pathway of purine nucleotide biosynthesis. Catalyzes the first committed step in the biosynthesis of AMP from IMP. The polypeptide is Adenylosuccinate synthetase (Talaromyces stipitatus (strain ATCC 10500 / CBS 375.48 / QM 6759 / NRRL 1006) (Penicillium stipitatum)).